The primary structure comprises 1136 residues: Probable LRR receptor-like serine/threonine-protein kinase At4g36180 (1136 aa).

The first 22 residues, 1–22 (MAMDISLFFIFLVIYAPLVSYA), serve as a signal peptide directing secretion. Residues 23-751 (DESQAEIDAL…TAEGKKKKRK (729 aa)) lie on the Extracellular side of the membrane. LRR repeat units follow at residues 93–115 (MLRKLSLRSNSFNGTIPTSLAYC), 117–139 (RLLSVFLQYNSLSGKLPPAMRNL), 141–162 (SLEVFNVAGNRLSGEIPVGLPS), 163–186 (SLQFLDISSNTFSGQIPSGLANLT), 187–210 (QLQLLNLSYNQLTGEIPASLGNLQ), 211–233 (SLQYLWLDFNLLQGTLPSAISNC), 235–256 (SLVHLSASENEIGGVIPAAYGA), and 259–280 (KLEVLSLSNNNFSGTVPFSLFC). 2 N-linked (GlcNAc...) asparagine glycosylation sites follow: Asn105 and Asn138. N-linked (GlcNAc...) asparagine glycosylation is found at Asn184, Asn192, and Asn232. Residues Asn269 and Asn281 are each glycosylated (N-linked (GlcNAc...) asparagine). LRR repeat units follow at residues 283–304 (SLTIVQLGFNAFSDIVRPETTA), 309–330 (GLQVLDLQENRISGRFPLWLTN), 333–355 (SLKNLDVSGNLFSGEIPPDIGNL), 357–379 (RLEELKLANNSLTGEIPVEIKQC), 381–403 (SLDVLDFEGNSLKGQIPEFLGYM), 405–426 (ALKVLSLGRNSFSGYVPSSMVN), 429–452 (QLERLNLGENNLNGSFPVELMALT), 453–479 (SLSELDLSGNRFSGAVPVSISNLSNLS), 480–500 (FLNLSGNGFSGEIPASVGNLF), 501–524 (KLTALDLSKQNMSGEVPVELSGLP), 525–546 (NVQVIALQGNNFSGVVPEGFSS), 549–571 (SLRYVNLSSNSFSGEIPQTFGFL), 573–595 (LLVSLSLSDNHISGSIPPEIGNC), 597–620 (ALEVLELRSNRLMGHIPADLSRLP), 621–643 (RLKVLDLGQNNLSGEIPPEISQS), 645–666 (SLNSLSLDHNHLSGVIPGSFSG), 669–691 (NLTKMDLSVNNLTGEIPASLALI), and 694–716 (NLVYFNVSSNNLKGEIPASLGSR). Asn365 carries an N-linked (GlcNAc...) asparagine glycan. N-linked (GlcNAc...) asparagine glycosylation is found at Asn441, Asn474, Asn477, Asn482, Asn511, Asn535, Asn554, and Asn594. The N-linked (GlcNAc...) asparagine glycan is linked to Asn631. Residues Asn669, Asn679, Asn699, and Asn719 are each glycosylated (N-linked (GlcNAc...) asparagine). The helical transmembrane segment at 752–772 (MILMIVMAAIGAFLLSLFCCF) threads the bilayer. The Cytoplasmic portion of the chain corresponds to 773–1136 (YVYTLLKWRK…ADPTSQPSPA (364 aa)). The disordered stretch occupies residues 786–819 (QQSTTGEKKRSPGRTSAGSRVRSSTSRSSTENGE). The span at 799 to 815 (RTSAGSRVRSSTSRSST) shows a compositional bias: low complexity. A phosphothreonine mark is found at Thr830 and Thr838. The region spanning 841–1123 (FDEENVLSRT…LEGCRVGPDV (283 aa)) is the Protein kinase domain. Phosphotyrosine is present on residues Tyr915 and Tyr1010.

It belongs to the protein kinase superfamily. Ser/Thr protein kinase family.

It is found in the cell membrane. The catalysed reaction is L-seryl-[protein] + ATP = O-phospho-L-seryl-[protein] + ADP + H(+). The enzyme catalyses L-threonyl-[protein] + ATP = O-phospho-L-threonyl-[protein] + ADP + H(+). This Arabidopsis thaliana (Mouse-ear cress) protein is Probable LRR receptor-like serine/threonine-protein kinase At4g36180.